The chain runs to 600 residues: UvrABC system protein C (600 aa).

In terms of domain architecture, GIY-YIG spans D15–V92. Residues S197–T232 form the UVR domain.

This sequence belongs to the UvrC family. Interacts with UvrB in an incision complex.

The protein resides in the cytoplasm. Its function is as follows. The UvrABC repair system catalyzes the recognition and processing of DNA lesions. UvrC both incises the 5' and 3' sides of the lesion. The N-terminal half is responsible for the 3' incision and the C-terminal half is responsible for the 5' incision. The sequence is that of UvrABC system protein C from Lactobacillus gasseri (strain ATCC 33323 / DSM 20243 / BCRC 14619 / CIP 102991 / JCM 1131 / KCTC 3163 / NCIMB 11718 / NCTC 13722 / AM63).